The following is a 431-amino-acid chain: Interleukin-11 receptor subunit alpha (431 aa).

The first 23 residues, Met-1–Ser-23, serve as a signal peptide directing secretion. Over Thr-24 to Ala-371 the chain is Extracellular. In terms of domain architecture, Ig-like C2-type spans Pro-27 to Gly-110. Disulfide bonds link Cys-48–Cys-94, Cys-120–Cys-130, and Cys-170–Cys-180. 2 consecutive Fibronectin type-III domains span residues Pro-112–Asp-219 and Pro-220–Thr-317. N-linked (GlcNAc...) asparagine glycosylation is present at Asn-127. The disordered stretch occupies residues Lys-151–Cys-170. Asn-194 carries an N-linked (GlcNAc...) asparagine glycan. A WSXWS motif motif is present at residues Trp-304 to Ser-308. Positions Glu-310–His-360 are disordered. Positions Leu-320–Leu-335 are enriched in basic and acidic residues. The span at Pro-344 to Pro-355 shows a compositional bias: pro residues. Residues Ser-372–Leu-392 form a helical membrane-spanning segment. Over Arg-393 to Ser-431 the chain is Cytoplasmic. The tract at residues Pro-402–Ser-431 is disordered.

This sequence belongs to the type I cytokine receptor family. Type 3 subfamily. On IL11 binding, forms a multimer complex with IL6ST/gp130. Post-translationally, a short soluble form is also released from the membrane by proteolysis. The sIL11RA is formed either by limited proteolysis of membrane-bound receptors, a process referred to as ectodomain shedding, or directly secreted from the cells after alternative mRNA splicing. mIL11RA is cleaved by the proteases ADAM10, ELANE and PRTN3.

The protein resides in the membrane. It is found in the secreted. Functionally, receptor for interleukin-11 (IL11). The receptor systems for IL6, LIF, OSM, CNTF, IL11 and CT1 can utilize IL6ST for initiating signal transmission. The IL11/IL11RA/IL6ST complex may be involved in the control of proliferation and/or differentiation of skeletogenic progenitor or other mesenchymal cells. Essential for the normal development of craniofacial bones and teeth. Restricts suture fusion and tooth number. Soluble form of IL11 receptor (sIL11RA) that acts as an agonist of IL11 activity. The IL11:sIL11RA complex binds to IL6ST/gp130 on cell surfaces and induces signaling also on cells that do not express membrane-bound IL11RA in a process called IL11 trans-signaling. The protein is Interleukin-11 receptor subunit alpha of Rattus norvegicus (Rat).